A 336-amino-acid chain; its full sequence is PHD finger protein 11 (336 aa).

A disordered region spans residues 1–20; sequence MAEETAPPCGPVSTGGSLSP. The segment at 25-61 adopts a C2HC pre-PHD-type zinc-finger fold; it reads KRTCALCPDGHEWSVIYFAPSANIAAHENCLLYSSGL. A PHD-type zinc finger spans residues 91 to 143; sequence LKCSLCNKGGATVGCDLSSCRKSYHYVCAKKDHAIPQVDEDLGTYKIFCPEHP. Disordered regions lie at residues 139–179 and 303–336; these read CPEH…KKMK and DPSGSTSGSLLPPEDHQCRCQESPEVQAGSGDSL. The span at 303–314 shows a compositional bias: low complexity; that stretch reads DPSGSTSGSLLP.

Interacts with BRCA1 and RELA.

It localises to the nucleus. Functionally, positive regulator of Th1-type cytokine gene expression. The chain is PHD finger protein 11 (Phf11) from Rattus norvegicus (Rat).